The following is a 633-amino-acid chain: ATP-dependent rRNA helicase SPB4 (633 aa).

Residues phenylalanine 11–histidine 39 carry the Q motif motif. The region spanning isoleucine 42–isoleucine 253 is the Helicase ATP-binding domain. Position 55-62 (alanine 55–threonine 62) interacts with ATP. Over residues glutamate 119–aspartate 131 the composition is skewed to acidic residues. Residues glutamate 119–proline 140 form a disordered region. The DEAD box signature appears at aspartate 201 to aspartate 204. The region spanning alanine 292–lysine 446 is the Helicase C-terminal domain. Residues alanine 530–glutamate 629 adopt a coiled-coil conformation. Basic and acidic residues-rich tracts occupy residues aspartate 547–arginine 581 and arginine 588–alanine 623. Residues aspartate 547–aspartate 633 are disordered. Residues glutamate 624–aspartate 633 are compositionally biased toward acidic residues.

This sequence belongs to the DEAD box helicase family. DDX55/SPB4 subfamily. In terms of assembly, component of pre-60S ribosomal complexes.

The protein resides in the nucleus. The protein localises to the nucleolus. It carries out the reaction ATP + H2O = ADP + phosphate + H(+). In terms of biological role, ATP-binding RNA helicase involved in the biogenesis of 60S ribosomal subunits. Binds 90S pre-ribosomal particles and dissociates from pre-60S ribosomal particles after processing of 27SB pre-rRNA. Required for the normal formation of 18S rRNA through the processing of pre-rRNAs at sites A0, A1 and A2, and the normal formation of 25S and 5.8S rRNAs through the processing of pre-rRNAs at sites C1 and C2. The sequence is that of ATP-dependent rRNA helicase SPB4 from Phaeosphaeria nodorum (strain SN15 / ATCC MYA-4574 / FGSC 10173) (Glume blotch fungus).